Here is a 156-residue protein sequence, read N- to C-terminus: Arginine repressor (156 aa).

This sequence belongs to the ArgR family.

It is found in the cytoplasm. Its pathway is amino-acid biosynthesis; L-arginine biosynthesis [regulation]. Functionally, regulates arginine biosynthesis genes. The sequence is that of Arginine repressor from Tolumonas auensis (strain DSM 9187 / NBRC 110442 / TA 4).